Here is a 468-residue protein sequence, read N- to C-terminus: Ribulose bisphosphate carboxylase large chain (468 aa).

Lys-7 carries the post-translational modification N6,N6,N6-trimethyllysine. The substrate site is built by Asn-116 and Thr-166. The active-site Proton acceptor is Lys-168. Lys-170 lines the substrate pocket. Lys-194, Asp-196, and Glu-197 together coordinate Mg(2+). N6-carboxylysine is present on Lys-194. The active-site Proton acceptor is the His-287. Positions 288, 320, and 372 each coordinate substrate.

Belongs to the RuBisCO large chain family. Type I subfamily. As to quaternary structure, heterohexadecamer of 8 large chains and 8 small chains. Requires Mg(2+) as cofactor.

The protein localises to the plastid. It is found in the chloroplast. It carries out the reaction 2 (2R)-3-phosphoglycerate + 2 H(+) = D-ribulose 1,5-bisphosphate + CO2 + H2O. It catalyses the reaction D-ribulose 1,5-bisphosphate + O2 = 2-phosphoglycolate + (2R)-3-phosphoglycerate + 2 H(+). Functionally, ruBisCO catalyzes two reactions: the carboxylation of D-ribulose 1,5-bisphosphate, the primary event in carbon dioxide fixation, as well as the oxidative fragmentation of the pentose substrate in the photorespiration process. Both reactions occur simultaneously and in competition at the same active site. In Couroupita guianensis (Cannonball tree), this protein is Ribulose bisphosphate carboxylase large chain.